The following is a 512-amino-acid chain: Glutathione-binding protein GsiB (512 aa).

An N-terminal signal peptide occupies residues 1–26 (MARAVHRSGLVALGIVTALMASCAFA).

Belongs to the bacterial solute-binding protein 5 family. In terms of assembly, the complex is composed of two ATP-binding proteins (GsiA), two transmembrane proteins (GsiC and GsiD) and a solute-binding protein (GsiB).

The protein resides in the periplasm. Its function is as follows. Part of the ABC transporter complex GsiABCD involved in glutathione import. Binds glutathione. The polypeptide is Glutathione-binding protein GsiB (Shigella dysenteriae serotype 1 (strain Sd197)).